We begin with the raw amino-acid sequence, 347 residues long: Ryncolin-3 (347 aa).

Positions 1-19 are cleaved as a signal peptide; the sequence is MKPWAAFHLIFLVASSVEG. A Collagen-like domain is found at 57–114; the sequence is GIPGVPGINGSEGLKGDPGPQGLPGETGFDGIPGVAGPKGDKGDQGDKGDKGDKGDKG. A disordered region spans residues 62-115; that stretch reads PGINGSEGLKGDPGPQGLPGETGFDGIPGVAGPKGDKGDQGDKGDKGDKGDKGD. A compositionally biased stretch (basic and acidic residues) spans 95 to 115; sequence KGDKGDQGDKGDKGDKGDKGD. Positions 121 to 341 constitute a Fibrinogen C-terminal domain; that stretch reads DCPPTDVEVR…YADMKIRPQQ (221 aa). Cystine bridges form between C132–C160 and C284–C297.

It belongs to the ficolin lectin family. Veficolin subfamily. In terms of processing, hydroxylated. Expressed by the venom duct.

The protein localises to the secreted. Functionally, initiates complement activation and/or interferes in platelet aggregation and/or blood coagulation. This Cerberus rynchops (Dog-faced water snake) protein is Ryncolin-3.